The sequence spans 106 residues: UPF0060 membrane protein AZC_0909 (106 aa).

A run of 4 helical transmembrane segments spans residues proline 4–valine 24, glycine 27–leucine 47, alanine 58–glutamate 78, and arginine 84–proline 104.

It belongs to the UPF0060 family.

Its subcellular location is the cell inner membrane. This Azorhizobium caulinodans (strain ATCC 43989 / DSM 5975 / JCM 20966 / LMG 6465 / NBRC 14845 / NCIMB 13405 / ORS 571) protein is UPF0060 membrane protein AZC_0909.